A 178-amino-acid chain; its full sequence is Natriuretic and helokinestatin peptides (178 aa).

The first 25 residues, 1–25 (MNPRLACSTWLPLLLVLFTLDQGRA), serve as a signal peptide directing secretion. 5 propeptides span residues 26-58 (NPVERGQEYRSLSKRFDDDSTELILEPRASEEN), 69-73 (ASDEN), 85-89 (ASDEN), 103-112 (ASEQKGPPFN), and 123-146 (AANENALRKLIKRSFERSPGRNKR). 2 disordered regions span residues 69–107 (ASDENVPPAYVPLVPRASDENVPPPPLQMPLIPRASEQK) and 135–155 (RSFERSPGRNKRLSPGDGCFG). An intrachain disulfide couples cysteine 153 to cysteine 169.

This sequence in the C-terminal section; belongs to the natriuretic peptide family. As to expression, expressed by the venom gland.

It localises to the secreted. Functionally, helokinestatins antagonize the vasodilatory actions of bradykinin at the B2 bradykinin receptor (BDKRB2), with helokinestatin-1 being the most potent antagonist. Its function is as follows. exhibits hypotensive and vasodepressor activities, possibly by targeting natriuretic peptide receptors NPR1 and NPR2. The sequence is that of Natriuretic and helokinestatin peptides from Heloderma suspectum cinctum (Banded Gila monster).